A 1235-amino-acid polypeptide reads, in one-letter code: DNA polymerase catalytic subunit (1235 aa).

Disordered stretches follow at residues 640–692 (QGRF…TAGR) and 1098–1134 (AAAPGDEPAPPAALPSPAKRPRETPSPADPPGGASKP). Positions 650–661 (APKRPAAAREDE) are enriched in basic and acidic residues. A compositionally biased stretch (acidic residues) spans 662–675 (ERPEEEGEDEDERE). Over residues 676–691 (EGGGEREPEGARETAG) the composition is skewed to basic and acidic residues.

It belongs to the DNA polymerase type-B family. As to quaternary structure, forms a complex with the ssDNA-binding protein UL29, the DNA polymerase processivity factor, and the alkaline exonuclease. Interacts with the putative helicase-primase complex subunit UL8; this interaction may coordinate leading and lagging strand DNA synthesis at the replication fork.

Its subcellular location is the host nucleus. It carries out the reaction DNA(n) + a 2'-deoxyribonucleoside 5'-triphosphate = DNA(n+1) + diphosphate. The catalysed reaction is Endonucleolytic cleavage to 5'-phosphomonoester.. Its function is as follows. Replicates viral genomic DNA. The replication complex is composed of six viral proteins: the DNA polymerase, processivity factor, primase, primase-associated factor, helicase, and ssDNA-binding protein. Additionally, the polymerase contains an intrinsic ribonuclease H (RNase H) activity that specifically degrades RNA/DNA heteroduplexes or duplex DNA substrates in the 5' to 3' direction. Therefore, it can catalyze the excision of the RNA primers that initiate the synthesis of Okazaki fragments at a replication fork during viral DNA replication. This is DNA polymerase catalytic subunit from Homo sapiens (Human).